The sequence spans 371 residues: Methylthioribose-1-phosphate isomerase (371 aa).

Substrate is bound by residues 53-55 (RGA), arginine 90, and glutamine 203. Aspartate 243 serves as the catalytic Proton donor. Residue 253-254 (NK) coordinates substrate.

It belongs to the eIF-2B alpha/beta/delta subunits family. MtnA subfamily.

The enzyme catalyses 5-(methylsulfanyl)-alpha-D-ribose 1-phosphate = 5-(methylsulfanyl)-D-ribulose 1-phosphate. It carries out the reaction 5-deoxy-alpha-D-ribose 1-phosphate = 5-deoxy-D-ribulose 1-phosphate. It participates in amino-acid biosynthesis; L-methionine biosynthesis via salvage pathway; L-methionine from S-methyl-5-thio-alpha-D-ribose 1-phosphate: step 1/6. Its function is as follows. Catalyzes the interconversion of methylthioribose-1-phosphate (MTR-1-P) into methylthioribulose-1-phosphate (MTRu-1-P). Also catalyzes the interconversion of 5-deoxyribose 1-phosphate and 5-deoxyribulose 1-phosphate. Part of a bifunctional DHAP-shunt salvage pathway for SAM by-products. This is Methylthioribose-1-phosphate isomerase from Escherichia coli O45:K1 (strain S88 / ExPEC).